The chain runs to 264 residues: Undecaprenyl-diphosphatase (264 aa).

8 consecutive transmembrane segments (helical) span residues 7-27 (IVIP…PVSS), 45-65 (TKIL…LFFY), 86-106 (IHVL…YNKI), 109-129 (LFNP…LIIA), 145-165 (INLV…YPGF), 186-206 (VNFS…LDLI), 215-235 (LNIP…FLLI), and 244-264 (KVSL…IYFI).

It belongs to the UppP family.

It localises to the cell membrane. The enzyme catalyses di-trans,octa-cis-undecaprenyl diphosphate + H2O = di-trans,octa-cis-undecaprenyl phosphate + phosphate + H(+). Catalyzes the dephosphorylation of undecaprenyl diphosphate (UPP). Confers resistance to bacitracin. This chain is Undecaprenyl-diphosphatase, found in Buchnera aphidicola subsp. Schizaphis graminum (strain Sg).